The sequence spans 163 residues: Type-2 ice-structuring protein (163 aa).

A signal peptide spans 1–17 (MLTVSLLVCAMMALTQA). Residues 18 to 34 (NDDKILKGTATEAGPVS) constitute a propeptide that is removed on maturation. A C-type lectin domain is found at 39–163 (PNCPAGWQPL…SHKSVCAMTF (125 aa)). Disulfide bonds link cysteine 41/cysteine 52, cysteine 69/cysteine 159, cysteine 103/cysteine 134, cysteine 123/cysteine 145, and cysteine 135/cysteine 151.

In terms of processing, the N-terminus is blocked.

It localises to the secreted. In terms of biological role, antifreeze proteins lower the blood freezing point. The sequence is that of Type-2 ice-structuring protein from Hemitripterus americanus (Sea raven).